The following is a 32-amino-acid chain: Photosystem II reaction center protein Psb30 (32 aa).

A helical membrane pass occupies residues 3–23 (IVIVQLGSLALITLAGPIIIV).

The protein belongs to the Psb30/Ycf12 family. As to quaternary structure, PSII is composed of 1 copy each of membrane proteins PsbA, PsbB, PsbC, PsbD, PsbE, PsbF, PsbH, PsbI, PsbJ, PsbK, PsbL, PsbM, PsbT, PsbY, PsbZ, Psb30/Ycf12, peripheral proteins of the oxygen-evolving complex and a large number of cofactors. It forms dimeric complexes.

It localises to the plastid. The protein localises to the chloroplast thylakoid membrane. A core subunit of photosystem II (PSII), probably helps stabilize the reaction center. This chain is Photosystem II reaction center protein Psb30, found in Euglena viridis (Cercaria viridis).